A 309-amino-acid chain; its full sequence is tRNA pseudouridine synthase B (309 aa).

Residue Asp-51 is the Nucleophile of the active site.

Belongs to the pseudouridine synthase TruB family. Type 1 subfamily.

It carries out the reaction uridine(55) in tRNA = pseudouridine(55) in tRNA. In terms of biological role, responsible for synthesis of pseudouridine from uracil-55 in the psi GC loop of transfer RNAs. This is tRNA pseudouridine synthase B from Coxiella burnetii (strain RSA 331 / Henzerling II).